The primary structure comprises 413 residues: Argininosuccinate synthase (413 aa).

Residues 14-22 (AYSGGLDTS) and A41 each bind ATP. L-citrulline contacts are provided by Y94 and S99. An ATP-binding site is contributed by G124. L-aspartate contacts are provided by T126, N130, and D131. Residue N130 coordinates L-citrulline. L-citrulline-binding residues include R134, S185, S194, E270, and Y282.

The protein belongs to the argininosuccinate synthase family. Type 1 subfamily. In terms of assembly, homotetramer.

The protein localises to the cytoplasm. The enzyme catalyses L-citrulline + L-aspartate + ATP = 2-(N(omega)-L-arginino)succinate + AMP + diphosphate + H(+). The protein operates within amino-acid biosynthesis; L-arginine biosynthesis; L-arginine from L-ornithine and carbamoyl phosphate: step 2/3. This Hyphomonas neptunium (strain ATCC 15444) protein is Argininosuccinate synthase.